The sequence spans 237 residues: Apoptosis regulator OPG045 (237 aa).

It belongs to the orthopoxvirus OPG045 family. Interacts with host BAK1, BAX and BID.

It localises to the host mitochondrion outer membrane. The protein resides in the host cytoplasm. Its function is as follows. Plays a role in the inhibition of host apoptosis. Interacts with host BAX and thereby inhibits its activity. In Homo sapiens (Human), this protein is Apoptosis regulator OPG045 (OPG045).